Consider the following 756-residue polypeptide: Polyribonucleotide nucleotidyltransferase (756 aa).

Mg(2+)-binding residues include aspartate 532 and aspartate 538. Positions 598 to 657 (PRVTAIKVPVDKIGEVIGPKGKMINSITEQTGANISIEDDGTVFVGATDGPSAQAAIDMI) constitute a KH domain. Residues 669-738 (GERFLGTVVK…ARGKISLIPV (70 aa)) enclose the S1 motif domain.

It belongs to the polyribonucleotide nucleotidyltransferase family. Mg(2+) serves as cofactor.

The protein localises to the cytoplasm. It catalyses the reaction RNA(n+1) + phosphate = RNA(n) + a ribonucleoside 5'-diphosphate. Functionally, involved in mRNA degradation. Catalyzes the phosphorolysis of single-stranded polyribonucleotides processively in the 3'- to 5'-direction. The chain is Polyribonucleotide nucleotidyltransferase from Rhodococcus erythropolis (strain PR4 / NBRC 100887).